A 27-amino-acid polypeptide reads, in one-letter code: Flagellar filament 31.5 kDa core protein (27 aa).

Belongs to the bacterial flagellin family. As to quaternary structure, the flagellum consists of an outer layer composed of repeating units of FlaA around a core that contains one or all of five antigenically related polypeptides.

The protein localises to the periplasmic flagellum. It localises to the periplasm. Functionally, component of the core of the flagella. In Spirochaeta aurantia, this protein is Flagellar filament 31.5 kDa core protein.